The following is a 122-amino-acid chain: Large ribosomal subunit protein uL14 (122 aa).

This sequence belongs to the universal ribosomal protein uL14 family. In terms of assembly, part of the 50S ribosomal subunit. Forms a cluster with proteins L3 and L19. In the 70S ribosome, L14 and L19 interact and together make contacts with the 16S rRNA in bridges B5 and B8.

In terms of biological role, binds to 23S rRNA. Forms part of two intersubunit bridges in the 70S ribosome. This is Large ribosomal subunit protein uL14 from Helicobacter pylori (strain J99 / ATCC 700824) (Campylobacter pylori J99).